The primary structure comprises 383 residues: MDFSLTEEQELLLASIRELITTNFPEEYFRTCDQNGTYPREFMRALADNGISMLGVPEEFGGIPADYVTQMLALMEVSKCGAPAFLITNGQCIHSMRRFGSAEQLRKTAESTLETGDPAYALALTEPGAGSDNNSATTTYTRKNGKVYINGQKTFITGAKEYPYMLVLARDPQPKDPKKAFTLWWVDSSKPGIKINPLHKIGWHMLSTCEVYLDNVEVEESDMVGEEGMGFLNVMYNFEMERLINAARSTGFAECAFEDAARYANQRIAFGKPIGHNQMIQEKLALMAIKIDNMRNMVLKVAWQADQHQSLRTSAALAKLYCARTAMEVIDDAIQIMGGLGYTDEARVSRFWRDVRCERIGGGTDEIMIYVAGRQILKDYQNK.

The protein belongs to the acyl-CoA dehydrogenase family. FAD serves as cofactor.

The enzyme catalyses a 2,3-saturated acyl-CoA + A = a 2,3-dehydroacyl-CoA + AH2. In Escherichia coli O157:H7, this protein is Probable acyl-CoA dehydrogenase YdiO (ydiO).